Reading from the N-terminus, the 357-residue chain is MAIPLPAFYKWDVYDSKLNNVHGHVECRYTAQTGYWSDPCFVQSPFLSVHGLAPGLNYGQQVYEGIQARRTARNEILIFRPGASADRMAKSATAVSMPPVPYELFVRSVHMAVALNADYVPPHDFHGSMYIRPCQFGSSCQIGLQPPDEFIFCVFVQPHIALHGHGSLRALIAEDFDRAATRGTGHVKIGGNYAPVIRWTQSAKKEENGGWDVLLHVDSKTQTRIDEFSTSAFIGTKYAEEQNEPPQIILPESAAAIQSITSDSVAWLAKSFGWNIVKQPVTIDELASLSEVMAVGTAAGLVPVSCIRHNSTNRTFEFPSAGPMYRQLKETLDNIQRGRSSDSFGWCEKLRYAEFVQ.

Pyridoxal 5'-phosphate is bound at residue Arg87. Lys188 bears the N6-(pyridoxal phosphate)lysine mark. Glu227 is a pyridoxal 5'-phosphate binding site.

It belongs to the class-IV pyridoxal-phosphate-dependent aminotransferase family. The cofactor is pyridoxal 5'-phosphate.

It participates in mycotoxin biosynthesis; HC-toxin biosynthesis. Its function is as follows. Aminotransferase, part of the diffuse TOX2 gene cluster that mediates the biosynthesis of the HC-toxin, cyclic tetrapeptide of structure cyclo(D-Pro-L-Ala-D-Ala-L-Aeo), where Aeo stands for 2-amino-9,10-epoxi-8-oxodecanoic acid. HC-toxin is a determinant of specificity and virulence in the interaction between the producing fungus and its host, maize. TOXF contributes to the synthesis of 2-amino-9,10-epoxi-8-oxodecanoic acid, an essential precursor for the production of the major forms of HC-toxin by the non-ribosomal peptide synthetase HTS1. This Cochliobolus carbonum (Maize leaf spot fungus) protein is Aminotransferase TOXF (TOXF).